A 397-amino-acid polypeptide reads, in one-letter code: Acetate kinase (397 aa).

N8 contributes to the Mg(2+) binding site. K15 serves as a coordination point for ATP. Substrate is bound at residue R89. The Proton donor/acceptor role is filled by D146. ATP contacts are provided by residues 206–210 (HVGNG), 283–285 (DMR), and 331–335 (GMGEN). Residue E383 participates in Mg(2+) binding.

It belongs to the acetokinase family. Homodimer. Mg(2+) is required as a cofactor. It depends on Mn(2+) as a cofactor.

It is found in the cytoplasm. It catalyses the reaction acetate + ATP = acetyl phosphate + ADP. The protein operates within metabolic intermediate biosynthesis; acetyl-CoA biosynthesis; acetyl-CoA from acetate: step 1/2. Catalyzes the formation of acetyl phosphate from acetate and ATP. Can also catalyze the reverse reaction. The sequence is that of Acetate kinase from Streptococcus agalactiae serotype III (strain NEM316).